The primary structure comprises 89 residues: Small ribosomal subunit protein uS15 (89 aa).

Belongs to the universal ribosomal protein uS15 family. In terms of assembly, part of the 30S ribosomal subunit. Forms a bridge to the 50S subunit in the 70S ribosome, contacting the 23S rRNA.

Its function is as follows. One of the primary rRNA binding proteins, it binds directly to 16S rRNA where it helps nucleate assembly of the platform of the 30S subunit by binding and bridging several RNA helices of the 16S rRNA. In terms of biological role, forms an intersubunit bridge (bridge B4) with the 23S rRNA of the 50S subunit in the ribosome. The polypeptide is Small ribosomal subunit protein uS15 (Buchnera aphidicola subsp. Acyrthosiphon pisum (strain 5A)).